Consider the following 1604-residue polypeptide: Ubiquitin carboxyl-terminal hydrolase 32 (1604 aa).

3 consecutive EF-hand domains span residues 91-126 (KDEEKAKYIFSLFSSESGSYVVREEMERMLHVVDGK), 228-263 (IRPSLSEGLFNAFDENRDNHIDFKEISCGLSACCRG), and 264-299 (PLAERQKFCFKVFDVDRDGVLSRVELKDMVVALLEV). Ca(2+) is bound by residues Asp241, Asn243, Asp245, His247, Glu252, Asp277, Asp279, Asp281, and Glu288. One can recognise a DUSP domain in the interval 369–585 (ATPEEEGQII…SNLALPRPVI (217 aa)). The USP domain occupies 734-1567 (TGLSNLGNTC…SAYILFYEQQ (834 aa)). The Nucleophile role is filled by Cys743. At Tyr1173 the chain carries Phosphotyrosine. Ser1350 bears the Phosphoserine mark. Residues 1353-1432 (EEDVLLSKSP…SKENLDTSKE (80 aa)) form a disordered region. A compositionally biased stretch (polar residues) spans 1360–1370 (KSPSSLSANVT). The segment covering 1371–1399 (SSPKGSPSSSRKSGASCPSSKNSSPNSSP) has biased composition (low complexity). A phosphoserine mark is found at Ser1372 and Ser1376. Positions 1415–1424 (GSKNKLSNSK) are enriched in polar residues. Ser1454 bears the Phosphoserine mark. Residues 1484–1504 (SNGQLGNHSEEDSTDDQREET) are disordered. A compositionally biased stretch (basic and acidic residues) spans 1491-1504 (HSEEDSTDDQREET). His1526 serves as the catalytic Proton acceptor. Residue Ser1588 is modified to Phosphoserine. Residue Cys1601 is modified to Cysteine methyl ester. Cys1601 carries S-farnesyl cysteine lipidation. Residues 1602-1604 (VLQ) constitute a propeptide, removed in mature form.

Belongs to the peptidase C19 family.

Its subcellular location is the golgi apparatus membrane. It carries out the reaction Thiol-dependent hydrolysis of ester, thioester, amide, peptide and isopeptide bonds formed by the C-terminal Gly of ubiquitin (a 76-residue protein attached to proteins as an intracellular targeting signal).. Its function is as follows. Deubiquitinase that can remove conjugated ubiquitin from target proteins, such as RAB7A and LAMTOR1. Acts as a positive regulator of the mTORC1 signaling by mediating deubiquitination of LAMTOR1, thereby promoting the association between LAMTOR1 and the lysosomal V-ATPase complex and subsequent activation of the mTORC1 complex. This chain is Ubiquitin carboxyl-terminal hydrolase 32, found in Mus musculus (Mouse).